The following is a 345-amino-acid chain: uncharacterized protein (345 aa).

A disordered region spans residues 1–98; that stretch reads MNDEMKGKSG…ISGKSFIDPE (98 aa). Basic and acidic residues-rich tracts occupy residues 18 to 27, 42 to 68, and 76 to 86; these read RSDDDSDKRT, SRAD…EDSP, and PGDETPEKADH.

It belongs to the class IV-like SAM-binding methyltransferase superfamily. RNA methyltransferase TrmH family.

This is an uncharacterized protein from Escherichia coli O157:H7.